An 802-amino-acid chain; its full sequence is Putative flavin carrier protein 3 (802 aa).

A signal peptide spans 1–28 (MRFLQVYKSSALIGLIILLASKVNLAEA). The Lumenal portion of the chain corresponds to 29–169 (KRKLVATSLV…YFSNGKTVSQ (141 aa)). The N-linked (GlcNAc...) asparagine glycan is linked to Asn149. A helical membrane pass occupies residues 170–190 (IGVKWATAVVAGIGLLLSAIL). Residues 191-200 (STFGNSTAAS) are Cytoplasmic-facing. The chain crosses the membrane as a helical span at residues 201-221 (HISANTMSLFLYFQSVVVVAM). Over 222–229 (QHVHRVPP) the chain is Lumenal. A helical membrane pass occupies residues 230–250 (IAAAWAENLVWSMGLIRISFM). The Cytoplasmic portion of the chain corresponds to 251 to 255 (QRIFR). A helical transmembrane segment spans residues 256–278 (WYVQSTGGTPSLYLTSTSMSVLA). The Lumenal portion of the chain corresponds to 279-323 (QRSWQYLMELPLIKRATNVLYGNANTLIFRGIKRLGYKMGIENTS). N-linked (GlcNAc...) asparagine glycosylation occurs at Asn321. Residues 324–344 (IVCTGFTFFVLCGYVLAGFII) form a helical membrane-spanning segment. Residues 345–377 (VFKCCVELATRLGWIQKARFWEFRKQWRMILKG) lie on the Cytoplasmic side of the membrane. The helical transmembrane segment at 378-398 (ALLRYIYIGFVQLTILSFWEF) threads the bilayer. The Lumenal portion of the chain corresponds to 399–405 (TERDSPA). The helical transmembrane segment at 406–426 (VIVIACLFILLSCGLMLWAAW) threads the bilayer. At 427–467 (RTVFFARRSVALYNNPAALLYGDEYVLHKYGFFYTMFNANH) the chain is on the cytoplasmic side. Residues 468–488 (YWWNIVLLSYIFVKSLLVGFA) form a helical membrane-spanning segment. The Lumenal portion of the chain corresponds to 489 to 495 (QASGQTQ). The helical transmembrane segment at 496–516 (VLFMFILDLFYFVAIIYYKPY) threads the bilayer. At 517 to 525 (LDRPTNIMN) the chain is on the cytoplasmic side. The chain crosses the membrane as a helical span at residues 526–546 (ILIATVTVVNSFLFMFFSDLF). A glycan (N-linked (GlcNAc...) asparagine) is linked at Asn547. Topologically, residues 547–557 (NQSYKVAAIMG) are lumenal. The chain crosses the membrane as a helical span at residues 558 to 578 (WIFFIMNAAFSFILLMMILAF). Over 579–802 (AGMMLFSKNP…PPGFFDEGFM (224 aa)) the chain is Cytoplasmic. Ser616 and Ser635 each carry phosphoserine. The segment at 629 to 802 (KDHDDNSDYE…PPGFFDEGFM (174 aa)) is disordered. 3 stretches are compositionally biased toward polar residues: residues 653 to 663 (DETTPTTVTSS), 697 to 717 (KQQT…STLG), and 761 to 788 (DTSS…NNKQ). 2 positions are modified to phosphoserine: Ser779 and Ser782.

It belongs to the transient receptor potential (TRP) ion channel family.

Its subcellular location is the endoplasmic reticulum membrane. Functionally, may be responsible for the transport of FAD into the endoplasmic reticulum lumen, where it is required for oxidative protein folding. This Saccharomyces cerevisiae (strain ATCC 204508 / S288c) (Baker's yeast) protein is Putative flavin carrier protein 3 (FLC3).